The chain runs to 201 residues: Large ribosomal subunit protein uL4 (201 aa).

Residues 46 to 71 (QKTRAEVVGSGKKPWRQKGTGRARAG) form a disordered region.

The protein belongs to the universal ribosomal protein uL4 family. In terms of assembly, part of the 50S ribosomal subunit.

Functionally, one of the primary rRNA binding proteins, this protein initially binds near the 5'-end of the 23S rRNA. It is important during the early stages of 50S assembly. It makes multiple contacts with different domains of the 23S rRNA in the assembled 50S subunit and ribosome. Its function is as follows. Forms part of the polypeptide exit tunnel. This chain is Large ribosomal subunit protein uL4, found in Shewanella piezotolerans (strain WP3 / JCM 13877).